Reading from the N-terminus, the 285-residue chain is NAD kinase (285 aa).

Asp-68 functions as the Proton acceptor in the catalytic mechanism. Residues 68–69 (DG), 142–143 (ND), Arg-153, Arg-170, Asp-172, and Gln-242 each bind NAD(+).

Belongs to the NAD kinase family. The cofactor is a divalent metal cation.

The protein localises to the cytoplasm. The catalysed reaction is NAD(+) + ATP = ADP + NADP(+) + H(+). In terms of biological role, involved in the regulation of the intracellular balance of NAD and NADP, and is a key enzyme in the biosynthesis of NADP. Catalyzes specifically the phosphorylation on 2'-hydroxyl of the adenosine moiety of NAD to yield NADP. The protein is NAD kinase of Acidobacterium capsulatum (strain ATCC 51196 / DSM 11244 / BCRC 80197 / JCM 7670 / NBRC 15755 / NCIMB 13165 / 161).